A 336-amino-acid polypeptide reads, in one-letter code: MNTPKPQIAITMGDPCGVGPEIIVAALSDPAIRSACKPLVLGDRRAMQRALTVCNSPLELITVSSPAEAADLPDSVIPLLELSSLANTDIDYGKPSELSGDAVYRYIRRAAELCLTGEVAAMATAPISKEAMHRAGHHYPGHTELLAELCRCDEFVMMLAGDVLRVALVTIHEALAHVPALISTEQVLKTIRVTANGVAPLCGNRSPRIAVLALNPHCGEGGMFGSEEADAIIPAITAAQSEGLDVAGPFSADTFFHFAVQEPAPYDAVVAMYHDQGLIPLKMRHFDDGINITLGLPIIRTSVDHGTAYNLAGTGTASATSMKASIRIAAKLAATR.

Residues histidine 142 and threonine 143 each contribute to the substrate site. Histidine 172, histidine 217, and histidine 274 together coordinate a divalent metal cation. Substrate is bound by residues lysine 282, asparagine 291, and arginine 300.

Belongs to the PdxA family. In terms of assembly, homodimer. Zn(2+) is required as a cofactor. Requires Mg(2+) as cofactor. It depends on Co(2+) as a cofactor.

It localises to the cytoplasm. It carries out the reaction 4-(phosphooxy)-L-threonine + NAD(+) = 3-amino-2-oxopropyl phosphate + CO2 + NADH. It functions in the pathway cofactor biosynthesis; pyridoxine 5'-phosphate biosynthesis; pyridoxine 5'-phosphate from D-erythrose 4-phosphate: step 4/5. Catalyzes the NAD(P)-dependent oxidation of 4-(phosphooxy)-L-threonine (HTP) into 2-amino-3-oxo-4-(phosphooxy)butyric acid which spontaneously decarboxylates to form 3-amino-2-oxopropyl phosphate (AHAP). This Trichlorobacter lovleyi (strain ATCC BAA-1151 / DSM 17278 / SZ) (Geobacter lovleyi) protein is 4-hydroxythreonine-4-phosphate dehydrogenase.